A 589-amino-acid polypeptide reads, in one-letter code: Glucose starvation modulator protein 1 (589 aa).

The zn(2)-C6 fungal-type DNA-binding region spans 20–48 (CVFCHQKHLQCSNERPCKNCVKRNIGHEC). Disordered regions lie at residues 59–90 (LTGNGKGSSSKTKTPRKKLKSTPITASSPSVA), 218–240 (NNSNNTSHNDNFIAQNNNNNPEP), and 340–362 (ANGQTEDLLDHNKDDSRKNPGNG). Residues 80–90 (TPITASSPSVA) are compositionally biased toward polar residues. A compositionally biased stretch (basic and acidic residues) spans 347–357 (LLDHNKDDSRK). The PAS domain occupies 471–542 (SLLDYKKLVE…FKFFKNIAVN (72 aa)).

The protein belongs to the ERT1/acuK family.

Its subcellular location is the nucleus. In terms of biological role, transcription factor which regulates nonfermentable carbon utilization. This is Glucose starvation modulator protein 1 (GSM1) from Candida tropicalis (strain ATCC MYA-3404 / T1) (Yeast).